The sequence spans 103 residues: Large ribosomal subunit protein bL21 (103 aa).

It belongs to the bacterial ribosomal protein bL21 family. As to quaternary structure, part of the 50S ribosomal subunit. Contacts protein L20.

Its function is as follows. This protein binds to 23S rRNA in the presence of protein L20. In Acidovorax sp. (strain JS42), this protein is Large ribosomal subunit protein bL21.